Reading from the N-terminus, the 351-residue chain is S-adenosylmethionine:tRNA ribosyltransferase-isomerase (351 aa).

This sequence belongs to the QueA family. As to quaternary structure, monomer.

The protein localises to the cytoplasm. It catalyses the reaction 7-aminomethyl-7-carbaguanosine(34) in tRNA + S-adenosyl-L-methionine = epoxyqueuosine(34) in tRNA + adenine + L-methionine + 2 H(+). The protein operates within tRNA modification; tRNA-queuosine biosynthesis. Functionally, transfers and isomerizes the ribose moiety from AdoMet to the 7-aminomethyl group of 7-deazaguanine (preQ1-tRNA) to give epoxyqueuosine (oQ-tRNA). This is S-adenosylmethionine:tRNA ribosyltransferase-isomerase from Fusobacterium nucleatum subsp. nucleatum (strain ATCC 25586 / DSM 15643 / BCRC 10681 / CIP 101130 / JCM 8532 / KCTC 2640 / LMG 13131 / VPI 4355).